Consider the following 790-residue polypeptide: Type VI secretion system spike protein VgrG5 (790 aa).

2 stretches are compositionally biased toward basic and acidic residues: residues 753–763 (GFRDYRAEMPQ) and 772–790 (AYRRDASRPGAADKDEPTP). The segment at 753-790 (GFRDYRAEMPQHKPRSAPDAYRRDASRPGAADKDEPTP) is disordered.

The protein belongs to the VgrG protein family.

The protein resides in the secreted. Functionally, part of the H2 type VI secretion system (H2-T6SS) specialized secretion system, which delivers several virulence factors in both prokaryotic and eukaryotic cells during infection. Allows the delivery of the phospholipase effector PldB to target cells where it exerts its toxicity. Also plays a role in VgrG4b and its effector PldA secretion. This is Type VI secretion system spike protein VgrG5 from Pseudomonas aeruginosa (strain ATCC 15692 / DSM 22644 / CIP 104116 / JCM 14847 / LMG 12228 / 1C / PRS 101 / PAO1).